A 291-amino-acid polypeptide reads, in one-letter code: Acidic endochitinase (291 aa).

An N-terminal signal peptide occupies residues 1–22 (MIKYSFLLTALVLFLRALKLEA). Residues 23–291 (GDIVIYWGQN…GYSSAIKANV (269 aa)) enclose the GH18 domain. Intrachain disulfides connect C42–C89 and C72–C79. E149 functions as the Proton donor in the catalytic mechanism. C180 and C209 form a disulfide bridge.

Belongs to the glycosyl hydrolase 18 family. Chitinase class II subfamily.

The protein resides in the secreted. It localises to the cell wall. The catalysed reaction is Random endo-hydrolysis of N-acetyl-beta-D-glucosaminide (1-&gt;4)-beta-linkages in chitin and chitodextrins.. In terms of biological role, this protein functions as a defense against chitin containing fungal pathogens. The sequence is that of Acidic endochitinase from Nicotiana tabacum (Common tobacco).